Here is a 213-residue protein sequence, read N- to C-terminus: Golgi apparatus membrane protein TVP23 homolog A (213 aa).

The next 4 helical transmembrane spans lie at 32-52 (PLAT…YVSC), 54-74 (WFSK…SLDF), 123-143 (IFWL…FSTL), and 150-170 (WLAL…GYIL).

Belongs to the TVP23 family.

Its subcellular location is the membrane. This is Golgi apparatus membrane protein TVP23 homolog A (TVP23A) from Homo sapiens (Human).